The primary structure comprises 176 residues: NAD(P)H-quinone oxidoreductase subunit 6, chloroplastic (176 aa).

Transmembrane regions (helical) follow at residues 10 to 30, 32 to 52, 61 to 81, 95 to 115, and 152 to 172; these read FLLV…VLLT, PIYS…FYIL, AQLL…VMFM, VGSG…ITII, and FFLP…GAIA.

Belongs to the complex I subunit 6 family. NDH is composed of at least 16 different subunits, 5 of which are encoded in the nucleus.

It localises to the plastid. It is found in the chloroplast thylakoid membrane. The catalysed reaction is a plastoquinone + NADH + (n+1) H(+)(in) = a plastoquinol + NAD(+) + n H(+)(out). It catalyses the reaction a plastoquinone + NADPH + (n+1) H(+)(in) = a plastoquinol + NADP(+) + n H(+)(out). Functionally, NDH shuttles electrons from NAD(P)H:plastoquinone, via FMN and iron-sulfur (Fe-S) centers, to quinones in the photosynthetic chain and possibly in a chloroplast respiratory chain. The immediate electron acceptor for the enzyme in this species is believed to be plastoquinone. Couples the redox reaction to proton translocation, and thus conserves the redox energy in a proton gradient. This is NAD(P)H-quinone oxidoreductase subunit 6, chloroplastic (ndhG) from Manihot esculenta (Cassava).